We begin with the raw amino-acid sequence, 559 residues long: YTH domain-containing family protein 1 (559 aa).

The segment at 1–49 (MSATSVDPQRTKGQDNKVQNGSLHQKDAVHDNDFEPYLSGQSNPSNSYP) is disordered. Ser-2 is subject to N-acetylserine. Residues 24-33 (HQKDAVHDND) are compositionally biased toward basic and acidic residues. Ser-182 bears the Phosphoserine mark. Residues 239–365 (SKPAKPQPKM…PTSAPSVESH (127 aa)) are disordered. 2 stretches are compositionally biased toward low complexity: residues 279–305 (PAPK…AQPL) and 314–326 (QPQY…PLQP). Positions 343–361 (GANSDSNSVGNAQPTSAPS) are enriched in polar residues. The region spanning 389 to 523 (GRVFIIKSYS…EKAKQVLKII (135 aa)) is the YTH domain. RNA-binding positions include 395 to 397 (KSY), Asp-401, 411 to 412 (WC), Asn-441, Trp-465, and Trp-470.

It belongs to the YTHDF family. YTHDF1 subfamily. As to quaternary structure, interacts with CNOT1; promoting recruitment of the CCR4-NOT complex. Interacts with ribosomes. Interacts with eIF3 (EIF3A or EIF3B). Interacts with YTHDF3. In terms of processing, ubiquitinated by the CUL7-FBXW8 E3 ligase complex leading to degradation. Deubiquitinated and stabilized by USP5 by removing 'Lys-11'-linked polyubiquitination. In brain, preferentially expressed in the hippocampus.

The protein resides in the cytoplasm. The protein localises to the P-body. It is found in the stress granule. Its function is as follows. Specifically recognizes and binds N6-methyladenosine (m6A)-containing mRNAs, and regulates their stability. M6A is a modification present at internal sites of mRNAs and some non-coding RNAs and plays a role in mRNA stability and processing. Acts as a regulator of mRNA stability by promoting degradation of m6A-containing mRNAs via interaction with the CCR4-NOT complex. The YTHDF paralogs (YTHDF1, YTHDF2 and YTHDF3) share m6A-containing mRNAs targets and act redundantly to mediate mRNA degradation and cellular differentiation. Required to facilitate learning and memory formation in the hippocampus by binding to m6A-containing neuronal mRNAs. Acts as a regulator of axon guidance by binding to m6A-containing ROBO3 transcripts. Acts as a negative regulator of antigen cross-presentation in myeloid dendritic cells. In the context of tumorigenesis, negative regulation of antigen cross-presentation limits the anti-tumor response by reducing efficiency of tumor-antigen cross-presentation. Promotes formation of phase-separated membraneless compartments, such as P-bodies or stress granules, by undergoing liquid-liquid phase separation upon binding to mRNAs containing multiple m6A-modified residues: polymethylated mRNAs act as a multivalent scaffold for the binding of YTHDF proteins, juxtaposing their disordered regions and thereby leading to phase separation. The resulting mRNA-YTHDF complexes then partition into different endogenous phase-separated membraneless compartments, such as P-bodies, stress granules or neuronal RNA granules. The chain is YTH domain-containing family protein 1 from Mus musculus (Mouse).